A 236-amino-acid polypeptide reads, in one-letter code: Biosynthetic peptidoglycan transglycosylase (236 aa).

Residues 12-31 form a helical membrane-spanning segment; it reads ALLWFAAGSIAVVLVLRWVP.

The protein belongs to the glycosyltransferase 51 family.

The protein localises to the cell inner membrane. It carries out the reaction [GlcNAc-(1-&gt;4)-Mur2Ac(oyl-L-Ala-gamma-D-Glu-L-Lys-D-Ala-D-Ala)](n)-di-trans,octa-cis-undecaprenyl diphosphate + beta-D-GlcNAc-(1-&gt;4)-Mur2Ac(oyl-L-Ala-gamma-D-Glu-L-Lys-D-Ala-D-Ala)-di-trans,octa-cis-undecaprenyl diphosphate = [GlcNAc-(1-&gt;4)-Mur2Ac(oyl-L-Ala-gamma-D-Glu-L-Lys-D-Ala-D-Ala)](n+1)-di-trans,octa-cis-undecaprenyl diphosphate + di-trans,octa-cis-undecaprenyl diphosphate + H(+). It participates in cell wall biogenesis; peptidoglycan biosynthesis. Peptidoglycan polymerase that catalyzes glycan chain elongation from lipid-linked precursors. The chain is Biosynthetic peptidoglycan transglycosylase from Pseudomonas entomophila (strain L48).